The following is a 92-amino-acid chain: Elongation factor 1-beta (92 aa).

The protein belongs to the EF-1-beta/EF-1-delta family.

Promotes the exchange of GDP for GTP in EF-1-alpha/GDP, thus allowing the regeneration of EF-1-alpha/GTP that could then be used to form the ternary complex EF-1-alpha/GTP/AAtRNA. The polypeptide is Elongation factor 1-beta (Pyrobaculum neutrophilum (strain DSM 2338 / JCM 9278 / NBRC 100436 / V24Sta) (Thermoproteus neutrophilus)).